Consider the following 20-residue polypeptide: Elongation factor Tu (20 aa).

This sequence belongs to the GTP-binding elongation factor family. EF-Tu/EF-1A subfamily. Monomer.

The protein resides in the cytoplasm. Its function is as follows. This protein promotes the GTP-dependent binding of aminoacyl-tRNA to the A-site of ribosomes during protein biosynthesis. This chain is Elongation factor Tu (tuf), found in Mycoplasmopsis synoviae (Mycoplasma synoviae).